A 437-amino-acid polypeptide reads, in one-letter code: Na(+)/H(+) antiporter NhaA (437 aa).

The next 11 membrane-spanning stretches (helical) occupy residues 29-49, 74-94, 111-131, 139-159, 168-188, 196-216, 229-249, 307-327, 341-361, 376-396, and 411-431; these read TAGI…NTAW, LKHW…ALEL, LPVA…LLLV, GWGT…ALLG, LFLL…VAVG, VALG…LLGI, IWLA…ILGL, IALH…SNAG, IAIV…FSFL, WSLL…ALFI, and LGVL…LTLL.

This sequence belongs to the NhaA Na(+)/H(+) (TC 2.A.33) antiporter family.

The protein localises to the cell inner membrane. The enzyme catalyses Na(+)(in) + 2 H(+)(out) = Na(+)(out) + 2 H(+)(in). In terms of biological role, na(+)/H(+) antiporter that extrudes sodium in exchange for external protons. This is Na(+)/H(+) antiporter NhaA from Rhizobium meliloti (strain 1021) (Ensifer meliloti).